A 161-amino-acid polypeptide reads, in one-letter code: Large ribosomal subunit protein uL15 (161 aa).

The interval 1–43 (MKLSEIADNVGSRKKRMRIGRGIGSGKGKTGGRGGKGQTARSG) is disordered. Over residues 21–37 (RGIGSGKGKTGGRGGKG) the composition is skewed to gly residues.

Part of the 50S ribosomal subunit.

Binds to the 23S rRNA. The chain is Large ribosomal subunit protein uL15 from Rhodopseudomonas palustris (strain ATCC BAA-98 / CGA009).